Reading from the N-terminus, the 1519-residue chain is DNA (cytosine-5)-methyltransferase 4 (1519 aa).

Positions 1 to 24 (MEMETKAGKQKKRSVDSDDDVSKE) are enriched in basic and acidic residues. Residues 1 to 31 (MEMETKAGKQKKRSVDSDDDVSKERRPKRAA) form a disordered region. Lys-583 is covalently cross-linked (Glycyl lysine isopeptide (Lys-Gly) (interchain with G-Cter in ubiquitin)). The segment at 641–668 (ENVEEEELEEVEEEDENEEDDPEENELE) is disordered. Over residues 642 to 668 (NVEEEELEEVEEEDENEEDDPEENELE) the composition is skewed to acidic residues. 2 consecutive BAH domains span residues 715 to 849 (DVVV…FSLP) and 916 to 1033 (TTLK…KQFP). Residues 1078–1512 (LATLDIFAGC…RKLKEALYLK (435 aa)) enclose the SAM-dependent MTase C5-type domain. Cys-1183 is an active-site residue.

This sequence belongs to the class I-like SAM-binding methyltransferase superfamily. C5-methyltransferase family. Expressed at low levels in vegetative and floral organs.

The protein resides in the nucleus. The enzyme catalyses a 2'-deoxycytidine in DNA + S-adenosyl-L-methionine = a 5-methyl-2'-deoxycytidine in DNA + S-adenosyl-L-homocysteine + H(+). Functionally, maintains chromatin CpG methylation that plays a role in genomic imprinting, regulation of embryogenesis and seed viability. Required for proper patterns of CG DNA methylation in dividing cells. This Arabidopsis thaliana (Mouse-ear cress) protein is DNA (cytosine-5)-methyltransferase 4 (MET4).